Consider the following 360-residue polypeptide: N-acetylmuramoyl-L-alanine amidase CwlL (360 aa).

An N-terminal signal peptide occupies residues 1–39 (MVKVVKNFVKVNQYTRPGLKLAGVKGIVMHYTATPGASA). The N-acetylmuramoyl-L-alanine amidase domain maps to 40 to 154 (LNERDYFNGT…DVTNKICPAP (115 aa)). 4 consecutive repeat copies span residues 166–191 (RKKV…SSKS), 196–259 (LKKG…EKAL), 265–289 (KKKK…KVKS), and 291–355 (LMKG…KAKL). 2 X approximate repeats stretches follow at residues 166-289 (RKKV…KVKS) and 196-355 (LKKG…KAKL).

Belongs to the N-acetylmuramoyl-L-alanine amidase 2 family.

The protein resides in the secreted. It catalyses the reaction Hydrolyzes the link between N-acetylmuramoyl residues and L-amino acid residues in certain cell-wall glycopeptides.. The chain is N-acetylmuramoyl-L-alanine amidase CwlL (cwlL) from Bacillus licheniformis.